The sequence spans 120 residues: Synaptobrevin (120 aa).

Residues 1-38 (MSAPPSGPAPDAQGGAPGQPTGPPGAPPNTTSNRRLQQ) form a disordered region. At 1–98 (MSAPPSGPAP…KRKYWWKNCK (98 aa)) the chain is on the cytoplasmic side. The segment covering 29–38 (NTTSNRRLQQ) has biased composition (polar residues). Residues 35–95 (RLQQTQAQVE…AKLKRKYWWK (61 aa)) enclose the v-SNARE coiled-coil homology domain. A helical; Anchor for type IV membrane protein transmembrane segment spans residues 99-118 (MMIMLGGIGAIIVIVIIIYF). Residues 119–120 (FT) lie on the Vesicular side of the membrane.

This sequence belongs to the synaptobrevin family. As to expression, nervous system specific.

Its subcellular location is the cytoplasmic vesicle. It localises to the secretory vesicle. It is found in the synaptic vesicle membrane. The protein localises to the synapse. The protein resides in the synaptosome. Functionally, this protein may play a role in packaging, transport or release of neurotransmitters. The protein is Synaptobrevin of Tetronarce californica (Pacific electric ray).